A 152-amino-acid polypeptide reads, in one-letter code: UPF0178 protein YPTS_2857 (152 aa).

The protein belongs to the UPF0178 family.

The protein is UPF0178 protein YPTS_2857 of Yersinia pseudotuberculosis serotype IB (strain PB1/+).